A 185-amino-acid polypeptide reads, in one-letter code: Elongation factor P (185 aa).

This sequence belongs to the elongation factor P family.

It localises to the cytoplasm. Its pathway is protein biosynthesis; polypeptide chain elongation. Its function is as follows. Involved in peptide bond synthesis. Stimulates efficient translation and peptide-bond synthesis on native or reconstituted 70S ribosomes in vitro. Probably functions indirectly by altering the affinity of the ribosome for aminoacyl-tRNA, thus increasing their reactivity as acceptors for peptidyl transferase. The protein is Elongation factor P of Salinispora arenicola (strain CNS-205).